A 577-amino-acid polypeptide reads, in one-letter code: Maltase A1 (577 aa).

Residues 1 to 19 (MRPQSAACLLLAIVGFVGA) form the signal peptide. Residues N119 and N151 are each glycosylated (N-linked (GlcNAc...) asparagine). The Nucleophile role is filled by D221. N-linked (GlcNAc...) asparagine glycosylation is present at N244. Residue E297 is the Proton donor of the active site. 2 N-linked (GlcNAc...) asparagine glycosylation sites follow: N315 and N331.

It belongs to the glycosyl hydrolase 13 family.

The catalysed reaction is Hydrolysis of terminal, non-reducing (1-&gt;4)-linked alpha-D-glucose residues with release of alpha-D-glucose.. The protein is Maltase A1 (Mal-A1) of Drosophila melanogaster (Fruit fly).